A 365-amino-acid polypeptide reads, in one-letter code: Quinone oxidoreductase-like protein 2 homolog (365 aa).

Belongs to the zinc-containing alcohol dehydrogenase family. Quinone oxidoreductase subfamily.

In Nematostella vectensis (Starlet sea anemone), this protein is Quinone oxidoreductase-like protein 2 homolog.